The chain runs to 315 residues: Initiation factor TFIIB homolog (315 aa).

The protein belongs to the asfivirus C315R family.

Functionally, putative initation factor. This chain is Initiation factor TFIIB homolog, found in African swine fever virus (strain Badajoz 1971 Vero-adapted) (Ba71V).